Consider the following 29-residue polypeptide: Dermaseptin-J8 (29 aa).

In terms of tissue distribution, expressed by the skin glands.

The protein resides in the secreted. In terms of biological role, has antimicrobial activity. In Phasmahyla jandaia (Jandaia leaf frog), this protein is Dermaseptin-J8.